A 160-amino-acid polypeptide reads, in one-letter code: Sperm protein associated with the nucleus on the X chromosome N2 (160 aa).

Disordered regions lie at residues 1-48 (MEKP…TSEY) and 64-160 (SNQL…GEED). Over residues 10 to 35 (GEKRKSPCDSNNRNDEMQETPNRDLA) the composition is skewed to basic and acidic residues. Over residues 64 to 79 (SNQLENDQSQENSVNP) the composition is skewed to polar residues. Acidic residues predominate over residues 81–97 (QEEEDEGSSQEDEDLDS). Basic and acidic residues predominate over residues 136-148 (SSERSSQEEKDPD).

It belongs to the SPAN-X family.

The protein is Sperm protein associated with the nucleus on the X chromosome N2 (SPANXN2) of Pongo pygmaeus (Bornean orangutan).